The primary structure comprises 245 residues: 5-oxoprolinase subunit A (245 aa).

Belongs to the LamB/PxpA family. As to quaternary structure, forms a complex composed of PxpA, PxpB and PxpC.

It catalyses the reaction 5-oxo-L-proline + ATP + 2 H2O = L-glutamate + ADP + phosphate + H(+). In terms of biological role, catalyzes the cleavage of 5-oxoproline to form L-glutamate coupled to the hydrolysis of ATP to ADP and inorganic phosphate. The chain is 5-oxoprolinase subunit A from Chromobacterium violaceum (strain ATCC 12472 / DSM 30191 / JCM 1249 / CCUG 213 / NBRC 12614 / NCIMB 9131 / NCTC 9757 / MK).